We begin with the raw amino-acid sequence, 183 residues long: MAFTMLRPMAARVLYPDIGMLSEDEENRSESDTSDQSYGCCEGAEARRKVPRKTGPMVMVKQRQAANARERDRTQSVNTAFTALRTLIPTEPVDRKLSKIETLRLASSYIAHLANVLLLGEGCEDGQPCFSAIYGAKGDLDGRQPRSICTFCLSNQRKGGGRRDLGGNCLKVRGVTPLRVARR.

A disordered region spans residues 24–46; it reads DEENRSESDTSDQSYGCCEGAEA. The bHLH domain maps to 61–113; that stretch reads KQRQAANARERDRTQSVNTAFTALRTLIPTEPVDRKLSKIETLRLASSYIAHL.

Heterodimer; efficient DNA binding requires dimerization with another bHLH protein.

It localises to the nucleus. In terms of biological role, early transcription factor that plays a key role in somitogenesis, paraxial mesoderm development and regulation of stem cell pluripotency. Essential for the mesenchymal to epithelial transition associated with somite formation. Required for somite morphogenesis, thereby regulating patterning of the axial skeleton and skeletal muscles. Also plays a key role in regulation of stem cell pluripotency. Promotes pluripotency exit of embryonic stem cells (ESCs) by priming ESCs for differentiation. Acts as a key regulator of self-renewal of hematopoietic stem cells (HSCs) by mediating HSCs quiescence and long-term self-renewal. Acts by forming a heterodimer with another helix-loop-helix (bHLH) protein, that binds DNA on E-box motifs (5'-CANNTG-3') and activates transcription of target genes. The polypeptide is Transcription factor 15 (TCF15) (Gallus gallus (Chicken)).